A 113-amino-acid polypeptide reads, in one-letter code: C-C motif chemokine 15 (113 aa).

Residues 1–21 form the signal peptide; that stretch reads MKVSVAALSCLMLVAVLGSQA. 3 disulfide bridges follow: cysteine 53–cysteine 77, cysteine 54–cysteine 93, and cysteine 64–cysteine 104.

Belongs to the intercrine beta (chemokine CC) family. As to quaternary structure, monomer. In terms of processing, the N-terminal is proteolytically cleaved by proteases associated with inflammatory responses. The processed forms CCL15(22-92), CCL15(25-92) and CCL15(29-92) exhibit increase in CCR1-mediated signaling and chemotaxis assays in vitro. Most abundant in heart, skeletal muscle and adrenal gland. Lower levels in placenta, liver, pancreas and bone marrow. CCL15(22-92), CCL15(25-92) and CCL15(29-92) are found in high levels in synovial fluids from rheumatoid patients.

It is found in the secreted. In terms of biological role, chemotactic factor that attracts T-cells and monocytes, but not neutrophils, eosinophils, or B-cells. Acts mainly via CC chemokine receptor CCR1. Also binds to CCR3. CCL15(22-92), CCL15(25-92) and CCL15(29-92) are more potent chemoattractants than the CCL15. This is C-C motif chemokine 15 (CCL15) from Homo sapiens (Human).